Consider the following 261-residue polypeptide: Thioesterase TesA (261 aa).

Catalysis depends on residues Ser104, Asp208, and His236.

It belongs to the thioesterase family.

It catalyses the reaction a fatty acyl-CoA + H2O = a fatty acid + CoA + H(+). In terms of biological role, involved in the synthesis of both phthiocerol dimycocerosates (PDIMs) and phenolic glycolipids (PGLs), which are structurally related lipids non-covalently bound to the outer cell wall layer of M.tuberculosis and are important virulence factors. The sequence is that of Thioesterase TesA (tesA) from Mycobacterium leprae (strain TN).